We begin with the raw amino-acid sequence, 201 residues long: MGNPQTTIAYSLHHPRASLTSALPDAAQVVHVFESGTRAVLTRGRARQDRLPRGGVVIQHTPIGLLVIIDCRAEFCAYRFIGRASTQRLERWWDAHMYAYPFDSWVSSSHGESVRSATAGILTVVWTPDTIYITATIYGTAPEAARGCDNAPLDVRPTTPPAPVSPTAGEFPANTTDLLVEVLREIQISPTLDDADPTPGT.

It belongs to the alphaherpesvirinae HHV-1 UL4 family.

It localises to the host nucleus. The protein is Nuclear protein UL4 of Human herpesvirus 2 (strain HG52) (HHV-2).